Here is a 21-residue protein sequence, read N- to C-terminus: Pollen allergen Ole e 7 (21 aa).

The polypeptide is Pollen allergen Ole e 7 (Olea europaea (Common olive)).